A 654-amino-acid chain; its full sequence is Cytochrome B pre-mRNA-processing protein 1 (654 aa).

The protein localises to the mitochondrion. Functionally, responsible for conferring a stable 5'-end on cytochrome b mRNA. This is Cytochrome B pre-mRNA-processing protein 1 (CBP1) from Saccharomyces cerevisiae (strain ATCC 204508 / S288c) (Baker's yeast).